A 189-amino-acid chain; its full sequence is Crossover junction endodeoxyribonuclease RuvC (189 aa).

Residues D7, E68, and D141 contribute to the active site. D7, E68, and D141 together coordinate Mg(2+).

Belongs to the RuvC family. In terms of assembly, homodimer which binds Holliday junction (HJ) DNA. The HJ becomes 2-fold symmetrical on binding to RuvC with unstacked arms; it has a different conformation from HJ DNA in complex with RuvA. In the full resolvosome a probable DNA-RuvA(4)-RuvB(12)-RuvC(2) complex forms which resolves the HJ. The cofactor is Mg(2+).

It is found in the cytoplasm. It catalyses the reaction Endonucleolytic cleavage at a junction such as a reciprocal single-stranded crossover between two homologous DNA duplexes (Holliday junction).. In terms of biological role, the RuvA-RuvB-RuvC complex processes Holliday junction (HJ) DNA during genetic recombination and DNA repair. Endonuclease that resolves HJ intermediates. Cleaves cruciform DNA by making single-stranded nicks across the HJ at symmetrical positions within the homologous arms, yielding a 5'-phosphate and a 3'-hydroxyl group; requires a central core of homology in the junction. The consensus cleavage sequence is 5'-(A/T)TT(C/G)-3'. Cleavage occurs on the 3'-side of the TT dinucleotide at the point of strand exchange. HJ branch migration catalyzed by RuvA-RuvB allows RuvC to scan DNA until it finds its consensus sequence, where it cleaves and resolves the cruciform DNA. The protein is Crossover junction endodeoxyribonuclease RuvC of Rhodococcus jostii (strain RHA1).